A 274-amino-acid polypeptide reads, in one-letter code: ATP synthase subunit a (274 aa).

5 consecutive transmembrane segments (helical) span residues 43–63 (TLNI…LLVF), 103–123 (VIAP…MMDL), 149–169 (DVSI…FYSI), 223–243 (LIFI…LSVP), and 245–265 (AIFH…LTIV).

It belongs to the ATPase A chain family. As to quaternary structure, F-type ATPases have 2 components, CF(1) - the catalytic core - and CF(0) - the membrane proton channel. CF(1) has five subunits: alpha(3), beta(3), gamma(1), delta(1), epsilon(1). CF(0) has three main subunits: a(1), b(2) and c(9-12). The alpha and beta chains form an alternating ring which encloses part of the gamma chain. CF(1) is attached to CF(0) by a central stalk formed by the gamma and epsilon chains, while a peripheral stalk is formed by the delta and b chains.

It localises to the cell inner membrane. Key component of the proton channel; it plays a direct role in the translocation of protons across the membrane. The polypeptide is ATP synthase subunit a (Yersinia pestis bv. Antiqua (strain Antiqua)).